We begin with the raw amino-acid sequence, 574 residues long: Lengsin (574 aa).

Disordered stretches follow at residues 1 to 36 (MNDEGDLLQENTRDEGNETEASRMSKLRRTRKKVTK) and 66 to 131 (GNMS…IPTT). Residues 11-23 (NTRDEGNETEASR) show a composition bias toward basic and acidic residues. Basic residues predominate over residues 25–36 (SKLRRTRKKVTK). The span at 91–131 (NQTTVIKPSPLKTSASAPCSEFNTNSNHADNTWEDTQIPTT) shows a compositional bias: polar residues. The 95-residue stretch at 148 to 242 (NHLQFVRFEA…VICDTFTVTG (95 aa)) folds into the GS beta-grasp domain. In terms of domain architecture, GS catalytic spans 249–574 (PRYIAKRQLS…ERNKFLEYFI (326 aa)).

The protein belongs to the glutamine synthetase family. In terms of assembly, dodecamer. Interacts with BFSP2 and VIM.

Its function is as follows. May act as a component of the cytoskeleton or as a chaperone for the reorganization of intermediate filament proteins during terminal differentiation in the lens. Does not seem to have enzymatic activity. This chain is Lengsin (LGSN), found in Canis lupus familiaris (Dog).